We begin with the raw amino-acid sequence, 380 residues long: Ankyrin repeat domain-containing protein 63 (380 aa).

ANK repeat units lie at residues 11 to 40 (AGTRTFLEAMQAGKVHLARFVLDALDRSII), 46 to 79 (QGRTPLMVAVGLPDPALRARFVRLLLEQGAAVNL), 83 to 112 (RGRTALSLACERGHLDAVQLLVQFSGDPEA), 116 to 145 (AGNSPVMWAAACGHGAVLEFLVRSFRRLGL), and 153 to 182 (AGLTALQLAAARGHGTCVQALTGPWGRAAA). Composition is skewed to low complexity over residues 181-203 (AAAAAARGSNSDSPPGRPAPAAS) and 216-226 (RPLLARFARAA). The disordered stretch occupies residues 181–256 (AAAAAARGSN…GSERPELGRS (76 aa)). Ser-193 carries the phosphoserine modification. At Ser-294 the chain carries Phosphoserine. Residues 309 to 368 (PIGLSPHPEGGPGSGRLGLRRRSTAPDIPSLVGEAPGPESGPELEANALSVSVPGPNPWQ) form a disordered region.

The chain is Ankyrin repeat domain-containing protein 63 from Homo sapiens (Human).